We begin with the raw amino-acid sequence, 475 residues long: Squamosa promoter-binding-like protein 12 (475 aa).

Residues 49 to 73 are disordered; that stretch reads NHGSTNSSGGTFTSSSELANGSSKS. Residues 51-73 are compositionally biased toward low complexity; sequence GSTNSSGGTFTSSSELANGSSKS. An SBP-type zinc finger spans residues 177-254; that stretch reads SSYCQVEGCK…SDHNARRRKP (78 aa). Residues Cys-180, Cys-185, Cys-202, His-205, Cys-221, Cys-224, His-228, and Cys-240 each coordinate Zn(2+). A Bipartite nuclear localization signal motif is present at residues 237-253; the sequence is KKSCRRRLSDHNARRRK. The tract at residues 437–475 is disordered; that stretch reads GGGGFWQDGDDPPPLDHASQAQAFMHPGNGSSSGYGHLH. Residues 465–475 show a composition bias toward polar residues; sequence NGSSSGYGHLH.

As to expression, expressed in young panicles.

The protein localises to the nucleus. Trans-acting factor that binds specifically to the consensus nucleotide sequence 5'-TNCGTACAA-3'. May be involved in panicle development. This Oryza sativa subsp. japonica (Rice) protein is Squamosa promoter-binding-like protein 12 (SPL12).